The following is a 166-amino-acid chain: Zinc finger CCHC domain-containing protein 13 (166 aa).

Residues 4–21 (KDFFACGHSGHWARGCPR) form a CCHC-type 1; degenerate zinc finger. Residues 45-62 (YTCYCCGESGRNAKNCVL) form a CCHC-type 2; degenerate zinc finger. CCHC-type zinc fingers lie at residues 65–82 (NICY…DCKD), 89–106 (QHCY…DCDR), 110–127 (QKCY…DCAQ), and 128–145 (VKCY…NCSK).

The sequence is that of Zinc finger CCHC domain-containing protein 13 (ZCCHC13) from Homo sapiens (Human).